Consider the following 224-residue polypeptide: Large ribosomal subunit protein uL1 (224 aa).

Belongs to the universal ribosomal protein uL1 family. Part of the 50S ribosomal subunit.

In terms of biological role, binds directly to 23S rRNA. The L1 stalk is quite mobile in the ribosome, and is involved in E site tRNA release. Its function is as follows. Protein L1 is also a translational repressor protein, it controls the translation of the L11 operon by binding to its mRNA. This chain is Large ribosomal subunit protein uL1, found in Borrelia hermsii (strain HS1 / DAH).